A 237-amino-acid chain; its full sequence is Necrosis-inducing protein NPP1 (237 aa).

The signal sequence occupies residues 1–19 (MNVLTFLIAAAVSLAVVQA). An N-linked (GlcNAc...) asparagine glycan is attached at N67. The short motif at 103 to 113 (AIMYSWYFPKD) is the Conserved undecapeptide motif element. Residues 120-126 (GHRHDWE) carry the Conserved heptapetpide motif motif.

It belongs to the Necrosis inducing protein (NPP1) family.

It localises to the secreted. Its function is as follows. Secreted effector that acts as a pathogen-associated molecular pattern (PAMP) recognized by the plant immune system. Induces necrotic cell death and ethylene biosynthesis in parsley. Stimulates early induced host cellular responses implicated in elicitor signal transmission such as increased levels of cytoplasmic calcium, production of reactive oxygen species (ROS), and MAP kinase activation. Infiltration of NPP1 into leaves of Arabidopsis thaliana results in transcript accumulation of pathogenesis-related (PR) genes, production of ROS and ethylene, callose apposition, and hypersensitive response (HR)-like cell death. NPP1-mediated induction of the PR1 gene is salicylic acid-dependent, and requires both functional NDR1 and PAD4. This chain is Necrosis-inducing protein NPP1, found in Phytophthora nicotianae (Potato buckeye rot agent).